A 281-amino-acid polypeptide reads, in one-letter code: Ribosomal RNA small subunit methyltransferase A (281 aa).

6 residues coordinate S-adenosyl-L-methionine: asparagine 18, leucine 20, glycine 45, glutamate 66, aspartate 91, and asparagine 118.

It belongs to the class I-like SAM-binding methyltransferase superfamily. rRNA adenine N(6)-methyltransferase family. RsmA subfamily.

The protein resides in the cytoplasm. It catalyses the reaction adenosine(1518)/adenosine(1519) in 16S rRNA + 4 S-adenosyl-L-methionine = N(6)-dimethyladenosine(1518)/N(6)-dimethyladenosine(1519) in 16S rRNA + 4 S-adenosyl-L-homocysteine + 4 H(+). Specifically dimethylates two adjacent adenosines (A1518 and A1519) in the loop of a conserved hairpin near the 3'-end of 16S rRNA in the 30S particle. May play a critical role in biogenesis of 30S subunits. The polypeptide is Ribosomal RNA small subunit methyltransferase A (Histophilus somni (strain 129Pt) (Haemophilus somnus)).